The chain runs to 302 residues: 4-hydroxy-tetrahydrodipicolinate synthase (302 aa).

Thr57 contributes to the pyruvate binding site. The Proton donor/acceptor role is filled by Tyr145. The active-site Schiff-base intermediate with substrate is Lys173. Residue Ile213 coordinates pyruvate.

It belongs to the DapA family. Homotetramer; dimer of dimers.

The protein resides in the cytoplasm. The catalysed reaction is L-aspartate 4-semialdehyde + pyruvate = (2S,4S)-4-hydroxy-2,3,4,5-tetrahydrodipicolinate + H2O + H(+). It participates in amino-acid biosynthesis; L-lysine biosynthesis via DAP pathway; (S)-tetrahydrodipicolinate from L-aspartate: step 3/4. Catalyzes the condensation of (S)-aspartate-beta-semialdehyde [(S)-ASA] and pyruvate to 4-hydroxy-tetrahydrodipicolinate (HTPA). The sequence is that of 4-hydroxy-tetrahydrodipicolinate synthase from Mycolicibacterium gilvum (strain PYR-GCK) (Mycobacterium gilvum (strain PYR-GCK)).